The sequence spans 530 residues: Arginine--tRNA ligase (530 aa).

The 'HIGH' region motif lies at 113–123 (ANPTGPLHIGH).

This sequence belongs to the class-I aminoacyl-tRNA synthetase family. As to quaternary structure, monomer.

Its subcellular location is the cytoplasm. It carries out the reaction tRNA(Arg) + L-arginine + ATP = L-arginyl-tRNA(Arg) + AMP + diphosphate. The chain is Arginine--tRNA ligase from Campylobacter jejuni subsp. jejuni serotype O:2 (strain ATCC 700819 / NCTC 11168).